Consider the following 207-residue polypeptide: Guanylate kinase (207 aa).

The Guanylate kinase-like domain maps to 7 to 185 (GIVLVLCAPS…AYDELRAAYI (179 aa)). An ATP-binding site is contributed by 14–21 (APSGTGKT).

The protein belongs to the guanylate kinase family.

It localises to the cytoplasm. It catalyses the reaction GMP + ATP = GDP + ADP. Functionally, essential for recycling GMP and indirectly, cGMP. The protein is Guanylate kinase of Nitratidesulfovibrio vulgaris (strain ATCC 29579 / DSM 644 / CCUG 34227 / NCIMB 8303 / VKM B-1760 / Hildenborough) (Desulfovibrio vulgaris).